The chain runs to 295 residues: 33 kDa chaperonin (295 aa).

Intrachain disulfides connect C238-C240 and C271-C274.

The protein belongs to the HSP33 family. In terms of processing, under oxidizing conditions two disulfide bonds are formed involving the reactive cysteines. Under reducing conditions zinc is bound to the reactive cysteines and the protein is inactive.

It is found in the cytoplasm. Functionally, redox regulated molecular chaperone. Protects both thermally unfolding and oxidatively damaged proteins from irreversible aggregation. Plays an important role in the bacterial defense system toward oxidative stress. The sequence is that of 33 kDa chaperonin from Levilactobacillus brevis (strain ATCC 367 / BCRC 12310 / CIP 105137 / JCM 1170 / LMG 11437 / NCIMB 947 / NCTC 947) (Lactobacillus brevis).